A 97-amino-acid chain; its full sequence is Co-chaperonin GroES (97 aa).

It belongs to the GroES chaperonin family. Heptamer of 7 subunits arranged in a ring. Interacts with the chaperonin GroEL.

The protein resides in the cytoplasm. Together with the chaperonin GroEL, plays an essential role in assisting protein folding. The GroEL-GroES system forms a nano-cage that allows encapsulation of the non-native substrate proteins and provides a physical environment optimized to promote and accelerate protein folding. GroES binds to the apical surface of the GroEL ring, thereby capping the opening of the GroEL channel. The sequence is that of Co-chaperonin GroES from Klebsiella aerogenes (Enterobacter aerogenes).